Reading from the N-terminus, the 249-residue chain is Transmembrane protein 150C (249 aa).

At 1-9 (MDGKKCSVW) the chain is on the cytoplasmic side. The chain crosses the membrane as a helical span at residues 10-30 (MFLPLVFTLFTSAGLWIVYFI). Over 31–64 (AVEDDKILPLNSAARKSGVKHAPYISFAGDDPPA) the chain is Extracellular. Residues 65–85 (SCVFSQVMNMAAFLALVVAVL) form a helical membrane-spanning segment. Residues 86-97 (RFIQLKPKVLNP) are Cytoplasmic-facing. The helical transmembrane segment at 98–118 (WLNISGLVALCLASFGMTLLG) threads the bilayer. The Extracellular portion of the chain corresponds to 119-130 (NFQLTNDEEIHN). A helical transmembrane segment spans residues 131 to 151 (VGTSLTFGFGTLTCWIQAALT). Topologically, residues 152–168 (LKVNIKNEGRRAGIPRV) are cytoplasmic. Residues 169 to 189 (ILSAVITLCVVLYFILMAQDI) traverse the membrane as a helical segment. The Extracellular segment spans residues 190–192 (HMY). Residues 193–213 (AARVQWGLVMCFLAYFGTLAV) form a helical membrane-spanning segment. Topologically, residues 214–249 (EFRHYRYEIVCSEYQENFLSFSESLSEASEYQTDQV) are cytoplasmic.

The protein belongs to the DRAM/TMEM150 family.

The protein resides in the cell membrane. It localises to the lysosome membrane. The catalysed reaction is Ca(2+)(in) = Ca(2+)(out). It catalyses the reaction Na(+)(in) = Na(+)(out). The enzyme catalyses K(+)(in) = K(+)(out). It carries out the reaction Mg(2+)(in) = Mg(2+)(out). Its function is as follows. Nonselective cationic channel with high permeability to Ca(2+). Component of a mechanosensitive cation channel. Confers mechanically activated (MA) currents with slow inactivation kinetics. May contribute to proprioception. The polypeptide is Transmembrane protein 150C (Tmem150c) (Rattus norvegicus (Rat)).